A 369-amino-acid polypeptide reads, in one-letter code: Core histone macro-H2A.1 (369 aa).

Residues lysine 7 and lysine 9 each carry the N6-lactoyllysine; alternate modification. The 76-residue stretch at 15 to 90 (RSAKAGVIFP…ILLAVANDEE (76 aa)) folds into the Histone H2A domain. Lysine 18 is subject to N6-methyllysine. Lysine 116 carries the N6-acetyllysine; alternate modification. Residue lysine 116 forms a Glycyl lysine isopeptide (Lys-Gly) (interchain with G-Cter in ubiquitin); alternate linkage. Lysine 117 is covalently cross-linked (Glycyl lysine isopeptide (Lys-Gly) (interchain with G-Cter in ubiquitin)). Lysine 123 is subject to N6-acetyllysine; alternate. An N6,N6-dimethyllysine; alternate modification is found at lysine 123. A Glycyl lysine isopeptide (Lys-Gly) (interchain with G-Cter in SUMO2); alternate cross-link involves residue lysine 123. The interval 128-180 (ITPPPAKKAKSPSQKKTVSKKTGGKKGARKSKKKQGEVSKSASADSTTEGTPA) is disordered. Threonine 129 is modified (phosphothreonine). Over residues 144-160 (TVSKKTGGKKGARKSKK) the composition is skewed to basic residues. Over residues 165 to 177 (VSKSASADSTTEG) the composition is skewed to polar residues. A Glycyl lysine isopeptide (Lys-Gly) (interchain with G-Cter in SUMO2) cross-link involves residue lysine 167. Residues serine 170 and serine 173 each carry the phosphoserine modification. Residue threonine 178 is modified to Phosphothreonine. Residues 184–367 (TVLSTKSLFL…IYVQEMAKLD (184 aa)) form the Macro domain. A Glycyl lysine isopeptide (Lys-Gly) (interchain with G-Cter in SUMO2) cross-link involves residue lysine 189. Residues aspartate 203, isoleucine 204, valine 226, serine 275, glycine 312, serine 313, glycine 314, and asparagine 316 each coordinate a glycoprotein. A Glycyl lysine isopeptide (Lys-Gly) (interchain with G-Cter in SUMO2) cross-link involves residue lysine 320.

It belongs to the histone H2A family. In terms of assembly, the nucleosome is a histone octamer containing two molecules each of H2A, H2B, H3 and H4 assembled in one H3-H4 heterotetramer and two H2A-H2B heterodimers. ADP-ribosylated. Post-translationally, monoubiquitinated at either Lys-116 or Lys-117. May also be polyubiquitinated. Ubiquitination is mediated by the CUL3/SPOP E3 complex and does not promote proteasomal degradation. Instead, it is required for enrichment in inactive X chromosome chromatin. Present in liver (at protein level).

It localises to the nucleus. It is found in the chromosome. In terms of biological role, variant histone H2A which replaces conventional H2A in a subset of nucleosomes where it represses transcription. Nucleosomes wrap and compact DNA into chromatin, limiting DNA accessibility to the cellular machineries which require DNA as a template. Histones thereby play a central role in transcription regulation, DNA repair, DNA replication and chromosomal stability. DNA accessibility is regulated via a complex set of post-translational modifications of histones, also called histone code, and nucleosome remodeling. Isoform that specifically binds poly-ADP-ribose and O-acetyl-ADP-ribose and plays a key role in NAD(+) metabolism. Able to bind to the ends of poly-ADP-ribose chains created by PARP1 and cap them. This prevents PARP1 from further addition of ADP-ribose and thus limits the consumption of nuclear NAD(+), allowing the cell to maintain proper NAD(+) levels in both the nucleus and the mitochondria to promote proper mitochondrial respiration. Functionally, in contrast to isoform 1, does not bind poly-ADP-ribose. The sequence is that of Core histone macro-H2A.1 from Gallus gallus (Chicken).